The chain runs to 334 residues: Holliday junction branch migration complex subunit RuvB (334 aa).

Positions 4–184 (ADRIISPNAT…FGIVQRLEFY (181 aa)) are large ATPase domain (RuvB-L). Residues isoleucine 23, arginine 24, glycine 65, lysine 68, threonine 69, threonine 70, 131 to 133 (EDY), arginine 174, tyrosine 184, and arginine 221 each bind ATP. Mg(2+) is bound at residue threonine 69. Positions 185–255 (SVEDLRHIVA…VADKALNMLN (71 aa)) are small ATPAse domain (RuvB-S). The tract at residues 258–334 (LHGFDHMDRR…YNHFGLTMPE (77 aa)) is head domain (RuvB-H). DNA contacts are provided by arginine 313 and arginine 318.

Belongs to the RuvB family. In terms of assembly, homohexamer. Forms an RuvA(8)-RuvB(12)-Holliday junction (HJ) complex. HJ DNA is sandwiched between 2 RuvA tetramers; dsDNA enters through RuvA and exits via RuvB. An RuvB hexamer assembles on each DNA strand where it exits the tetramer. Each RuvB hexamer is contacted by two RuvA subunits (via domain III) on 2 adjacent RuvB subunits; this complex drives branch migration. In the full resolvosome a probable DNA-RuvA(4)-RuvB(12)-RuvC(2) complex forms which resolves the HJ.

It localises to the cytoplasm. The enzyme catalyses ATP + H2O = ADP + phosphate + H(+). Its function is as follows. The RuvA-RuvB-RuvC complex processes Holliday junction (HJ) DNA during genetic recombination and DNA repair, while the RuvA-RuvB complex plays an important role in the rescue of blocked DNA replication forks via replication fork reversal (RFR). RuvA specifically binds to HJ cruciform DNA, conferring on it an open structure. The RuvB hexamer acts as an ATP-dependent pump, pulling dsDNA into and through the RuvAB complex. RuvB forms 2 homohexamers on either side of HJ DNA bound by 1 or 2 RuvA tetramers; 4 subunits per hexamer contact DNA at a time. Coordinated motions by a converter formed by DNA-disengaged RuvB subunits stimulates ATP hydrolysis and nucleotide exchange. Immobilization of the converter enables RuvB to convert the ATP-contained energy into a lever motion, pulling 2 nucleotides of DNA out of the RuvA tetramer per ATP hydrolyzed, thus driving DNA branch migration. The RuvB motors rotate together with the DNA substrate, which together with the progressing nucleotide cycle form the mechanistic basis for DNA recombination by continuous HJ branch migration. Branch migration allows RuvC to scan DNA until it finds its consensus sequence, where it cleaves and resolves cruciform DNA. The chain is Holliday junction branch migration complex subunit RuvB from Hahella chejuensis (strain KCTC 2396).